The primary structure comprises 61 residues: Conotoxin Cal14.6 (61 aa).

The first 21 residues, 1–21 (MKFLLFLSVALLLTSFIETEA), serve as a signal peptide directing secretion. Residues 22-38 (GPVNEAGVERLFRALVG) constitute a propeptide that is removed on maturation. P57 carries the post-translational modification 4-hydroxyproline; partial. P60 bears the Proline amide mark.

Post-translationally, contains 2 disulfide bonds. As to expression, expressed by the venom duct.

The protein resides in the secreted. Functionally, probable neurotoxin with unknown target. Possibly targets ion channels. The polypeptide is Conotoxin Cal14.6 (Californiconus californicus (California cone)).